We begin with the raw amino-acid sequence, 803 residues long: Spondin-1 (803 aa).

The first 23 residues, 1 to 23 (MGLIFQPLFWQYVATSYALMVLG), serve as a signal peptide directing secretion. A Reelin domain is found at 24–190 (FLDETVEKAI…DLTLEGGNEK (167 aa)). 14 disulfides stabilise this stretch: Cys-39–Cys-124, Cys-152–Cys-178, Cys-195–Cys-331, Cys-196–Cys-335, Cys-198–Cys-409, Cys-437–Cys-474, Cys-448–Cys-483, Cys-453–Cys-488, Cys-496–Cys-532, Cys-507–Cys-511, Cys-542–Cys-548, Cys-553–Cys-589, Cys-564–Cys-568, and Cys-599–Cys-604. The 193-residue stretch at 191–383 (TIPDCCACGT…LTSLDHPQSP (193 aa)) folds into the Spondin domain. N-linked (GlcNAc...) asparagine glycosylation is present at Asn-210. 3 residues coordinate Ca(2+): Asp-320, Asp-349, and Asp-353. Residues 353–389 (DSGVTYESPNKPTIPQDKIRPLTSLDHPQSPSMTRGG) form a disordered region. Residues 354-365 (SGVTYESPNKPT) are compositionally biased toward polar residues. TSP type-1 domains are found at residues 436–489 (TCIY…PGCS), 495–549 (TCMM…EECE), 552–605 (SCIV…PECH), 608–662 (PCVL…PECP), and 664–717 (SCEL…RKCQ). Asn-677 is a glycosylation site (N-linked (GlcNAc...) asparagine). Residues 722-741 (NERRHLKDAREKRRSEKIKE) form a disordered region. The region spanning 750 to 802 (VCKMKPWTAWTECTKFCGGGIQERFMTVKKRFKSSQFTSCKDKKEIRACNVHP) is the TSP type-1 6 domain.

Expressed at high levels in the floor plate.

The protein localises to the secreted. The protein resides in the extracellular space. Its subcellular location is the extracellular matrix. In terms of biological role, promotes the attachment of spinal cord and sensory neuron cells and the outgrowth of neurites in vitro. May contribute to the growth and guidance of axons in both the spinal cord and the PNS. The polypeptide is Spondin-1 (spon1) (Xenopus laevis (African clawed frog)).